Consider the following 186-residue polypeptide: Lipid A palmitoyltransferase PagP (186 aa).

Residues 1–25 (MNVSKYVAIFSFVFIQLISVGKVFA) form the signal peptide. Catalysis depends on residues H58, D101, and S102.

The protein belongs to the lipid A palmitoyltransferase family. Homodimer.

The protein localises to the cell outer membrane. The catalysed reaction is lipid A (E. coli) + a 1-hexadecanoyl-2-acyl-sn-glycero-3-phosphocholine = hepta-acyl lipid A (E. coli) + a 2-acyl-sn-glycero-3-phosphocholine. The enzyme catalyses lipid IIA + a 1-hexadecanoyl-2-acyl-sn-glycero-3-phosphocholine = lipid IIB + a 2-acyl-sn-glycero-3-phosphocholine. It carries out the reaction lipid IVA (E. coli) + a 1-hexadecanoyl-2-acyl-sn-glycero-3-phosphocholine = lipid IVB (E. coli) + a 2-acyl-sn-glycero-3-phosphocholine. Transfers a palmitate residue from the sn-1 position of a phospholipid to the N-linked hydroxymyristate on the proximal unit of lipid A or its precursors. In Escherichia coli O157:H7, this protein is Lipid A palmitoyltransferase PagP.